The primary structure comprises 1893 residues: Endoribonuclease Dicer (1893 aa).

The Helicase ATP-binding domain maps to 41–217; sequence LLEAALDHNT…DLEEKIQKLE (177 aa). Position 54–61 (54–61) interacts with ATP; that stretch reads LNSGSGKT. The short motif at 165–168 is the DECH box element; sequence DECH. A disordered region spans residues 400-424; sequence VSWSDSEDDDDEDEEIEEKEKTETS. A compositionally biased stretch (acidic residues) spans 404 to 416; it reads DSEDDDDEDEEIE. One can recognise a Helicase C-terminal domain in the interval 424–593; that stretch reads SFPSPFTNIL…SIDCGNTESE (170 aa). In terms of domain architecture, Dicer dsRNA-binding fold spans 621–713; that stretch reads AIGHINRYCA…MPVGKETVKY (93 aa). Residues 718–737 are disordered; the sequence is DLHDEEETSVPGRPGSTKRR. A PAZ domain is found at 886–1036; the sequence is KFVEDIEKSE…LVPELCAIHP (151 aa). 2 RNase III domains span residues 1249 to 1380 and 1637 to 1795; these read TSDM…ETSG and FENF…MDSG. Residues Glu1293, Asp1371, Glu1374, Glu1676, Asp1781, and Glu1784 each contribute to the Mg(2+) site. Positions 1820-1885 constitute a DRBM domain; the sequence is VPRSPVRELL…ARRALRSLKA (66 aa).

It belongs to the helicase family. Dicer subfamily. In terms of assembly, component of the RISC loading complex (RLC), or micro-RNA (miRNA) loading complex (miRLC), which is composed of dicer1, ago2 and tarbp2; dicer1 and tarbp2 are required to process precursor miRNAs (pre-miRNAs) to mature miRNAs and then load them onto ago2. Note that the trimeric RLC/miRLC is also referred to as RISC. Mg(2+) serves as cofactor. Requires Mn(2+) as cofactor.

The protein localises to the cytoplasm. It catalyses the reaction Endonucleolytic cleavage to 5'-phosphomonoester.. In terms of biological role, double-stranded RNA (dsRNA) endoribonuclease playing a central role in short dsRNA-mediated post-transcriptional gene silencing. Cleaves naturally occurring long dsRNAs and short hairpin pre-microRNAs (miRNA) into fragments of twenty-one to twenty-three nucleotides with 3' overhang of two nucleotides, producing respectively short interfering RNAs (siRNA) and mature microRNAs. SiRNAs and miRNAs serve as guide to direct the RNA-induced silencing complex (RISC) to complementary RNAs to degrade them or prevent their translation. Gene silencing mediated by siRNAs, also called RNA interference, controls the elimination of transcripts from mobile and repetitive DNA elements of the genome but also the degradation of exogenous RNA of viral origin for instance. The miRNA pathway on the other side is a mean to specifically regulate the expression of target genes. The polypeptide is Endoribonuclease Dicer (dicer1) (Xenopus tropicalis (Western clawed frog)).